A 429-amino-acid chain; its full sequence is E3 ubiquitin-protein ligase ZNRF4 (429 aa).

Residues 1–27 (MPLCRPEHLMPRASRVPVAASLPLSHA) form the signal peptide. Residues 28 to 250 (VIPTQLPSRP…PPCHDLGCHP (223 aa)) lie on the Lumenal side of the membrane. Residues 30-67 (PTQLPSRPGHRPPGRPRRCPKASCLPPPVGPSSTQTAK) form a disordered region. Positions 37 to 49 (PGHRPPGRPRRCP) are enriched in basic residues. N-linked (GlcNAc...) asparagine glycans are attached at residues Asn107, Asn152, and Asn229. Residues 151–223 (GNRSLGAIVL…VSEAASQDLR (73 aa)) enclose the PA domain. The chain crosses the membrane as a helical span at residues 251–271 (VLTVSWVLGCTLALVVSAFFV). At 272–429 (LNHLWLWAQA…SSAPPEAPGQ (158 aa)) the chain is on the cytoplasmic side. An RING-type; atypical zinc finger spans residues 309 to 352 (CAICLDEYEEGDQLKILPCSHTYHCKCIDPWFSQAPRRSCPVCK).

As to quaternary structure, interacts with CANX.

The protein localises to the endoplasmic reticulum membrane. The catalysed reaction is S-ubiquitinyl-[E2 ubiquitin-conjugating enzyme]-L-cysteine + [acceptor protein]-L-lysine = [E2 ubiquitin-conjugating enzyme]-L-cysteine + N(6)-ubiquitinyl-[acceptor protein]-L-lysine.. Its pathway is protein modification; protein ubiquitination. Functionally, E3 ubiquitin-protein ligase that acts as a negative regulator of NOD2 signaling by mediating ubiquitination and degradation of RIPK2. Also catalyzes ubiquitination and proteasomal degradation of CANX within the endoplasmic reticulum. Could have a role in spermatogenesis. This Homo sapiens (Human) protein is E3 ubiquitin-protein ligase ZNRF4.